A 195-amino-acid chain; its full sequence is Glycerol-3-phosphate acyltransferase (195 aa).

Helical transmembrane passes span 2–22 (INLL…SFIV), 79–99 (AALM…LLGF), 111–131 (VALI…VVIL), and 146–166 (TILP…GLVL).

It belongs to the PlsY family. Probably interacts with PlsX.

The protein resides in the cell membrane. It catalyses the reaction an acyl phosphate + sn-glycerol 3-phosphate = a 1-acyl-sn-glycero-3-phosphate + phosphate. It participates in lipid metabolism; phospholipid metabolism. Functionally, catalyzes the transfer of an acyl group from acyl-phosphate (acyl-PO(4)) to glycerol-3-phosphate (G3P) to form lysophosphatidic acid (LPA). This enzyme utilizes acyl-phosphate as fatty acyl donor, but not acyl-CoA or acyl-ACP. This chain is Glycerol-3-phosphate acyltransferase, found in Alkaliphilus metalliredigens (strain QYMF).